The chain runs to 1115 residues: Calcium-transporting ATPase PAT1 (1115 aa).

At 1-99 (MTGSHEMESI…SIVLDALSDH (99 aa)) the chain is on the stromal side. Residues 100-120 (ILILLIVAAVVSIVLGSIDYT) traverse the membrane as a helical segment. At 121 to 126 (SDHPET) the chain is on the lumenal side. A helical membrane pass occupies residues 127–147 (GWIDGVAILVAVILVVGITSL). The Stromal segment spans residues 148–235 (NDFKNQARFR…KGQPQDNMDP (88 aa)). The chain crosses the membrane as a helical span at residues 236 to 256 (FLISGSMVIEGFGTMLVTAVG). The Lumenal segment spans residues 257–287 (VNSFNGKTMMGLRVASEDTPLQMKLSVLASR). The chain crosses the membrane as a helical span at residues 288-308 (IGYFGMGAAILMLLIAIPKYF). Residues 309-328 (IQRKVHDIEITREDAQPIVQ) are Stromal-facing. The helical transmembrane segment at 329–349 (LVISAITIVVVAVPEGLPLAV) threads the bilayer. Over 350-735 (TMALAYGMMK…GRNIYDAICK (386 aa)) the chain is Lumenal. Catalysis depends on aspartate 385, which acts as the 4-aspartylphosphate intermediate. Residues aspartate 678 and aspartate 682 each contribute to the Mg(2+) site. A helical transmembrane segment spans residues 736-756 (FLQFQLTVNVVAVTVAFIGTL). The Stromal segment spans residues 757–832 (TSDVVEDKDN…GKNAPLITRS (76 aa)). The segment at 762–784 (EDKDNSSSSGSADKVTEEEPRQG) is disordered. Residues 833–853 (MWKNIIGQAALQLAILFTILY) form a helical membrane-spanning segment. Over 854 to 873 (QGHNIFQHFVPQAHGPIIKN) the chain is Lumenal. Residues 874–894 (GLHHYTLVFNCFVFLQLFNEI) form a helical membrane-spanning segment. At 895 to 913 (NARVLGSRTNPFKNFFNNP) the chain is on the stromal side. The chain crosses the membrane as a helical span at residues 914 to 934 (IFIAVMIFTLGVQIIFVTFGG). Residues 935–943 (SATSTDSLY) lie on the Lumenal side of the membrane. Residues 944-964 (IVEWICCVVVGAISLPVGLLL) traverse the membrane as a helical segment. Residues 965-1115 (RKIPIREPVV…LHLPVNQINN (151 aa)) are Stromal-facing. The interval 984–1056 (AVYTSPSPNP…IPSSSSNLVN (73 aa)) is disordered. Positions 1040-1053 (NDNINTPIPSSSSN) are enriched in low complexity.

The protein belongs to the cation transport ATPase (P-type) (TC 3.A.3) family. Type IIB subfamily.

The protein localises to the contractile vacuole membrane. The protein resides in the cell membrane. It catalyses the reaction Ca(2+)(in) + ATP + H2O = Ca(2+)(out) + ADP + phosphate + H(+). In terms of biological role, calcium ATPase involved in Ca(2+) homeostasis as a component of the contractile vacuole complex. The protein is Calcium-transporting ATPase PAT1 (patA) of Dictyostelium discoideum (Social amoeba).